Consider the following 259-residue polypeptide: Global transcriptional regulator CodY (259 aa).

The tract at residues 1-155 (MELLAKTRKL…SSTVVGMEIL (155 aa)) is GAF domain. Residues 203–222 (ASKIADRVGITRSVIVNALR) constitute a DNA-binding region (H-T-H motif). Ser215 carries the phosphoserine modification.

It belongs to the CodY family.

It is found in the cytoplasm. In terms of biological role, DNA-binding global transcriptional regulator which is involved in the adaptive response to starvation and acts by directly or indirectly controlling the expression of numerous genes in response to nutrient availability. During rapid exponential growth, CodY is highly active and represses genes whose products allow adaptation to nutrient depletion. This chain is Global transcriptional regulator CodY, found in Bacillus mycoides (strain KBAB4) (Bacillus weihenstephanensis).